A 475-amino-acid polypeptide reads, in one-letter code: UDP-N-acetylmuramate--L-alanine ligase (475 aa).

125-131 (GTHGKTT) contributes to the ATP binding site.

It belongs to the MurCDEF family.

It localises to the cytoplasm. The enzyme catalyses UDP-N-acetyl-alpha-D-muramate + L-alanine + ATP = UDP-N-acetyl-alpha-D-muramoyl-L-alanine + ADP + phosphate + H(+). It participates in cell wall biogenesis; peptidoglycan biosynthesis. In terms of biological role, cell wall formation. This Haemophilus influenzae (strain 86-028NP) protein is UDP-N-acetylmuramate--L-alanine ligase.